Reading from the N-terminus, the 334-residue chain is Flotillin-like protein FloA (334 aa).

A helical transmembrane segment spans residues 3-23 (LYLIFLIVVGVVGLVLVGLFL).

This sequence belongs to the flotillin-like FloA family. Homooligomerizes.

The protein localises to the cell membrane. The protein resides in the membrane raft. Its function is as follows. Found in functional membrane microdomains (FMM) that may be equivalent to eukaryotic membrane rafts. FMMs are highly dynamic and increase in number as cells age. Flotillins are thought to be important factors in membrane fluidity. The chain is Flotillin-like protein FloA from Opitutus terrae (strain DSM 11246 / JCM 15787 / PB90-1).